The chain runs to 310 residues: Nodulation protein D 1 (310 aa).

Residues 6–63 (LDLNLLVALDALMTERQLTAAARRINLSQPAMSAAIARLRNYFHDDLFVMQGRELILT) enclose the HTH lysR-type domain. The H-T-H motif DNA-binding region spans 23–42 (LTAAARRINLSQPAMSAAIA).

It belongs to the LysR transcriptional regulatory family.

Its function is as follows. NodD regulates the expression of the nodABCFE genes which encode other nodulation proteins. NodD is also a negative regulator of its own expression. Binds flavonoids as inducers. The chain is Nodulation protein D 1 (nodD1) from Neorhizobium galegae (Rhizobium galegae).